The sequence spans 1938 residues: MTDAQMADFGAARYLRKSEKERLEAQTRPFDIRTECFVPDDKEEYVKAKIVSREGGKVTAETENGKTVTVKEDQVMQQNPPKFDKIEDMAMLTFLHEPAVLYNLKERYAAWMIYTYSGLFCVTVNPYKWLPVYNAEVVAAYRGKKRSEAPPHIFSISDNAYQYMLTDRENQSILITGESGAGKTVNTKRVIQYFASIAAIGDRSKKDNPNANKGTLEDQIIQANPALEAFGNAKTVRNDNSSRFGKFIRIHFGATGKLASADIETYLLEKSRVIFQLKAERNYHIFYQILSNKKPELLDMLLVTNNPYDYAFVSQGEVSVASIDDSEELLATDSAFDVLGFTAEEKAGVYKLTGAIMHYGNMKFKQKQREEQAEPDGTEDADKSAYLMGLNSADLLKGLCHPRVKVGNEYVTKGQSVQQVYYSIGALAKSVYEKMFNWMVTRINATLETKQPRQYFIGVLDIAGFEIFDFNSFEQLCINFTNEKLQQFFNHHMFVLEQEEYKKEGIEWEFIDFGMDLQACIDLIEKPMGIMSILEEECMFPKATDMTFKAKLYDNHLGKSNNFQKPRNVKGKQEAHFSLVHYAGTVDYNILGWLEKNKDPLNETVVGLYQKSSLKLMATLFSTYASADTGDSGKGKGGKKKGSSFQTVSALHRENLNKLMTNLRTTHPHFVRCIIPNERKAPGVMDNPLVMHQLRCNGVLEGIRICRKGFPNRILYGDFRQRYRILNPAAIPEGQFIDSGKGAEKLLGSLDIDHNQYKFGHTKVFFKAGLLGLLEEMRDERLSRIITRIQAQARGQLMRIEFKKMVERRDALLVIQWNIRAFMGVKNWPWMKLYFKIKPLLKSAETEKEMANMKEEFGRVKDALEKSEARRKELEEKMVSLLQEKNDLQLQVQAEQDNLADAEERCDQLIKNKIQLEAKVKEMTERLEDEEEMNAELTAKKRKLEDECSELKKDIDDLELTLAKVEKEKHATENKVKNLTEEMAGLDEIIAKLTKEKKALQEAHQQALDDLQAEEDKVNTLTKSKVKLEQQVDDLEGSLEQEKKVRMDLERAKRKLEGDLKLTQESIMDLENDKLQLEEKLKKKEFDISQQNSKIEDEQALALQLQKKLKENQARIEELEEELEAERTARAKVEKLRSDLTRELEEISERLEEAGGATSVQIEMNKKREAEFQKMRRDLEEATLQHEATAAALRKKHADSVAELGEQIDNLQRVKQKLEKEKSEFKLELDDVTSHMEQIIKAKANLEKVSRTLEDQANEYRVKLEEAQRSLNDFTTQRAKLQTENGELARQLEEKEALIWQLTRGKLSYTQQMEDLKRQLEEEGKAKNALAHALQSARHDCDLLREQYEEEMEAKAELQRVLSKANSEVAQWRTKYETDAIQRTEELEEAKKKLAQRLQDAEEAVEAVNAKCSSLEKTKHRLQNEIEDLMVDVERSNAAAAALDKKQRNFDKILAEWKQKYEESQSELESSQKEARSLSTELFKLKNAYEESLEHLETFKRENKNLQEEISDLTEQLGEGGKNVHELEKIRKQLEVEKLELQSALEEAEASLEHEEGKILRAQLEFNQIKAEIERKLAEKDEEMEQAKRNHLRVVDSLQTSLDAETRSRNEALRVKKKMEGDLNEMEIQLSQANRIASEAQKHLKNAQAHLKDTQLQLDDAVRANDDLKENIAIVERRNTLLQAELEELRAVVEQTERSRKLAEQELIETSERVQLLHSQNTSLINQKKKMDADLSQLQTEVEEAVQECRNAEEKAKKAITDAAMMAEELKKEQDTSAHLERMKKNMEQTIKDLQHRLDEAEQIALKGGKKQLQKLEARVRELENELEAEQKRNAESVKGMRKSERRIKELTYQTEEDKKNLVRLQDLVDKLQLKVKAYKRQAEEAEEQANTNLSKFRKVQHELDEAEERADIAESQVNKLRAKSRDIGAKQKMHDEE.

A Myosin N-terminal SH3-like domain is found at 31–80; that stretch reads DIRTECFVPDDKEEYVKAKIVSREGGKVTAETENGKTVTVKEDQVMQQNP. The 696-residue stretch at 84–779 folds into the Myosin motor domain; that stretch reads DKIEDMAMLT…LLGLLEEMRD (696 aa). Lysine 128 carries the post-translational modification N6,N6,N6-trimethyllysine. Residue 177 to 184 participates in ATP binding; the sequence is GESGAGKT. Threonine 378 carries the phosphothreonine modification. At serine 416 the chain carries Phosphoserine. Actin-binding stretches follow at residues 656-678 and 758-772; these read LNKL…IPNE and KFGH…GLLG. The 30-residue stretch at 782–811 folds into the IQ domain; that stretch reads LSRIITRIQAQARGQLMRIEFKKMVERRDA. 2 calmodulin-binding regions span residues 789–806 and 815–832; these read IQAQ…KKMV and IQWN…PWMK. A coiled-coil region spans residues 842–1938; sequence KSAETEKEMA…GAKQKMHDEE (1097 aa). A phosphoserine mark is found at serine 1089 and serine 1138. At tyrosine 1260 the chain carries Phosphotyrosine. Position 1270 is a phosphoserine (serine 1270). Threonine 1276 and threonine 1283 each carry phosphothreonine. Serine 1308 is subject to Phosphoserine. Phosphotyrosine is present on tyrosine 1309. The residue at position 1310 (threonine 1310) is a Phosphothreonine. Serine 1511 carries the phosphoserine modification. Residues threonine 1514 and threonine 1680 each carry the phosphothreonine modification. Residues 1907 to 1938 are disordered; the sequence is AEERADIAESQVNKLRAKSRDIGAKQKMHDEE. Over residues 1924–1938 the composition is skewed to basic and acidic residues; it reads KSRDIGAKQKMHDEE.

This sequence belongs to the TRAFAC class myosin-kinesin ATPase superfamily. Myosin family. As to quaternary structure, muscle myosin is a hexameric protein that consists of 2 heavy chain subunits (MHC), 2 alkali light chain subunits (MLC) and 2 regulatory light chain subunits (MLC-2).

The protein localises to the cytoplasm. The protein resides in the myofibril. Muscle contraction. The protein is Myosin-6 (Myh6) of Rattus norvegicus (Rat).